We begin with the raw amino-acid sequence, 82 residues long: MAHKKGQGASRNGRDSESKRLGMKVGAGQRVTTGSILVRQRGTKWHPAKNVGRGRDDTLFALVNGIVVLRKTDRTYVSVLPE.

The interval 1-26 (MAHKKGQGASRNGRDSESKRLGMKVG) is disordered.

Belongs to the bacterial ribosomal protein bL27 family.

The chain is Large ribosomal subunit protein bL27 from Chlamydia felis (strain Fe/C-56) (Chlamydophila felis).